Here is a 412-residue protein sequence, read N- to C-terminus: Aspartokinase (412 aa).

ACT domains follow at residues L266–N340 and I346–E412.

Belongs to the aspartokinase family.

It catalyses the reaction L-aspartate + ATP = 4-phospho-L-aspartate + ADP. Its pathway is amino-acid biosynthesis; L-lysine biosynthesis via DAP pathway; (S)-tetrahydrodipicolinate from L-aspartate: step 1/4. It participates in amino-acid biosynthesis; L-methionine biosynthesis via de novo pathway; L-homoserine from L-aspartate: step 1/3. It functions in the pathway amino-acid biosynthesis; L-threonine biosynthesis; L-threonine from L-aspartate: step 1/5. The sequence is that of Aspartokinase (lysC) from Pseudomonas aeruginosa (strain ATCC 15692 / DSM 22644 / CIP 104116 / JCM 14847 / LMG 12228 / 1C / PRS 101 / PAO1).